The sequence spans 640 residues: 1-deoxy-D-xylulose-5-phosphate synthase (640 aa).

Thiamine diphosphate contacts are provided by residues H79 and 120–122; that span reads AHS. D151 is a binding site for Mg(2+). Residues 152-153, N180, Y289, and E371 each bind thiamine diphosphate; that span reads GA. Residue N180 participates in Mg(2+) binding.

The protein belongs to the transketolase family. DXPS subfamily. Homodimer. Mg(2+) serves as cofactor. Requires thiamine diphosphate as cofactor.

It carries out the reaction D-glyceraldehyde 3-phosphate + pyruvate + H(+) = 1-deoxy-D-xylulose 5-phosphate + CO2. It participates in metabolic intermediate biosynthesis; 1-deoxy-D-xylulose 5-phosphate biosynthesis; 1-deoxy-D-xylulose 5-phosphate from D-glyceraldehyde 3-phosphate and pyruvate: step 1/1. Catalyzes the acyloin condensation reaction between C atoms 2 and 3 of pyruvate and glyceraldehyde 3-phosphate to yield 1-deoxy-D-xylulose-5-phosphate (DXP). The polypeptide is 1-deoxy-D-xylulose-5-phosphate synthase (Erythrobacter litoralis (strain HTCC2594)).